Here is a 154-residue protein sequence, read N- to C-terminus: Transcriptional repressor NrdR (154 aa).

A zinc finger spans residues 3–34 (CPYCRHPDSRVVDSREADDGQLIRRRRSCPEC). Positions 46-136 (LAVVKRSGVT…VYRSFESLAD (91 aa)) constitute an ATP-cone domain.

Belongs to the NrdR family. Requires Zn(2+) as cofactor.

Its function is as follows. Negatively regulates transcription of bacterial ribonucleotide reductase nrd genes and operons by binding to NrdR-boxes. In Salinispora tropica (strain ATCC BAA-916 / DSM 44818 / JCM 13857 / NBRC 105044 / CNB-440), this protein is Transcriptional repressor NrdR.